The following is a 492-amino-acid chain: Trigger factor (492 aa).

Residues 164–249 (GDLVVVDFVG…VSDVRVPRKA (86 aa)) form the PPIase FKBP-type domain. A disordered region spans residues 440 to 492 (EAEEDSIGKHDHDHDHKEKASDKPKAKKAAAPKKKAAPKKKAAPKAEKKSSDE). Residues 445–463 (SIGKHDHDHDHKEKASDKP) show a composition bias toward basic and acidic residues. A compositionally biased stretch (basic residues) spans 464-482 (KAKKAAAPKKKAAPKKKAA). Residues 483–492 (PKAEKKSSDE) show a composition bias toward basic and acidic residues.

Belongs to the FKBP-type PPIase family. Tig subfamily.

It localises to the cytoplasm. It catalyses the reaction [protein]-peptidylproline (omega=180) = [protein]-peptidylproline (omega=0). In terms of biological role, involved in protein export. Acts as a chaperone by maintaining the newly synthesized protein in an open conformation. Functions as a peptidyl-prolyl cis-trans isomerase. The polypeptide is Trigger factor (Zymomonas mobilis subsp. mobilis (strain ATCC 31821 / ZM4 / CP4)).